The following is a 199-amino-acid chain: NAD(P)H dehydrogenase (quinone) (199 aa).

The Flavodoxin-like domain occupies 4-190 (VLVLYYSSYG…TGARYQGRKI (187 aa)). Residues 10–15 (SSYGHL) and 78–80 (TRF) each bind FMN. Tyr-12 contributes to the NAD(+) binding site. Trp-98 contacts substrate. FMN contacts are provided by residues 113-119 (STATQHG) and His-134.

It belongs to the WrbA family. FMN is required as a cofactor.

It catalyses the reaction a quinone + NADH + H(+) = a quinol + NAD(+). The catalysed reaction is a quinone + NADPH + H(+) = a quinol + NADP(+). The protein is NAD(P)H dehydrogenase (quinone) of Caulobacter vibrioides (strain ATCC 19089 / CIP 103742 / CB 15) (Caulobacter crescentus).